We begin with the raw amino-acid sequence, 149 residues long: Calmodulin (149 aa).

The residue at position 2 (A2) is an N-acetylalanine. EF-hand domains follow at residues 8-43 (EQIA…LGQN), 44-79 (PTEA…KMKD), 81-116 (DSEE…LGEK), and 117-149 (LTDE…MTTK). Residues D21, D23, D25, T27, E32, D57, D59, N61, T63, E68, D94, D96, N98, and E105 each coordinate Ca(2+). K116 is modified (N6,N6,N6-trimethyllysine). The Ca(2+) site is built by D130, D132, D134, Q136, and E141.

It belongs to the calmodulin family. As to quaternary structure, interacts (in the presence of Ca(2+)) with pde-1, madf-3, rpl-7A, tax-6, efk-1, npp-1, obr-4, sos-1, akt-1, unc-13, tag-196, ugt-48, nmy-2, F27D4.4, ddx-23, efa-6 and R11H6.4.

Its function is as follows. Calmodulin mediates the control of a large number of enzymes, ion channels and other proteins by Ca(2+). Among the enzymes to be stimulated by the calmodulin-Ca(2+) complex are a number of protein kinases and phosphatases. The chain is Calmodulin (cmd-1) from Caenorhabditis elegans.